A 421-amino-acid chain; its full sequence is Serine hydroxymethyltransferase (421 aa).

Residues Leu121 and 125-127 (GHL) contribute to the (6S)-5,6,7,8-tetrahydrofolate site. Position 229 is an N6-(pyridoxal phosphate)lysine (Lys229).

This sequence belongs to the SHMT family. Homodimer. Pyridoxal 5'-phosphate serves as cofactor.

It is found in the cytoplasm. The catalysed reaction is (6R)-5,10-methylene-5,6,7,8-tetrahydrofolate + glycine + H2O = (6S)-5,6,7,8-tetrahydrofolate + L-serine. Its pathway is one-carbon metabolism; tetrahydrofolate interconversion. It functions in the pathway amino-acid biosynthesis; glycine biosynthesis; glycine from L-serine: step 1/1. Functionally, catalyzes the reversible interconversion of serine and glycine with tetrahydrofolate (THF) serving as the one-carbon carrier. This reaction serves as the major source of one-carbon groups required for the biosynthesis of purines, thymidylate, methionine, and other important biomolecules. Also exhibits THF-independent aldolase activity toward beta-hydroxyamino acids, producing glycine and aldehydes, via a retro-aldol mechanism. This Haemophilus influenzae (strain PittEE) protein is Serine hydroxymethyltransferase.